The primary structure comprises 179 residues: Large ribosomal subunit protein uL5 (179 aa).

It belongs to the universal ribosomal protein uL5 family. In terms of assembly, part of the 50S ribosomal subunit; part of the 5S rRNA/L5/L18/L25 subcomplex. Contacts the 5S rRNA and the P site tRNA. Forms a bridge to the 30S subunit in the 70S ribosome.

This is one of the proteins that bind and probably mediate the attachment of the 5S RNA into the large ribosomal subunit, where it forms part of the central protuberance. In the 70S ribosome it contacts protein S13 of the 30S subunit (bridge B1b), connecting the 2 subunits; this bridge is implicated in subunit movement. Contacts the P site tRNA; the 5S rRNA and some of its associated proteins might help stabilize positioning of ribosome-bound tRNAs. The polypeptide is Large ribosomal subunit protein uL5 (Geobacillus sp. (strain WCH70)).